The sequence spans 62 residues: Photosystem II reaction center protein Z (62 aa).

2 helical membrane-spanning segments follow: residues 8–28 (AVFA…VVFA) and 41–61 (FSGT…NSLI).

Belongs to the PsbZ family. In terms of assembly, PSII is composed of 1 copy each of membrane proteins PsbA, PsbB, PsbC, PsbD, PsbE, PsbF, PsbH, PsbI, PsbJ, PsbK, PsbL, PsbM, PsbT, PsbY, PsbZ, Psb30/Ycf12, at least 3 peripheral proteins of the oxygen-evolving complex and a large number of cofactors. It forms dimeric complexes.

The protein localises to the plastid. The protein resides in the chloroplast thylakoid membrane. Functionally, may control the interaction of photosystem II (PSII) cores with the light-harvesting antenna, regulates electron flow through the 2 photosystem reaction centers. PSII is a light-driven water plastoquinone oxidoreductase, using light energy to abstract electrons from H(2)O, generating a proton gradient subsequently used for ATP formation. In Pelargonium hortorum (Common geranium), this protein is Photosystem II reaction center protein Z.